Here is an 820-residue protein sequence, read N- to C-terminus: Trimethylamine-N-oxide reductase (820 aa).

Residues 1–33 (MAITRRSFLKGVATTSAASVIGPSLLASASANA) constitute a signal peptide (tat-type signal). Serine 179 serves as a coordination point for Mo-bis(molybdopterin guanine dinucleotide).

It belongs to the prokaryotic molybdopterin-containing oxidoreductase family. Mo-bis(molybdopterin guanine dinucleotide) serves as cofactor. Predicted to be exported by the Tat system. The position of the signal peptide cleavage has not been experimentally proven.

It is found in the periplasm. The enzyme catalyses trimethylamine + 2 Fe(III)-[cytochrome c] + H2O = trimethylamine N-oxide + 2 Fe(II)-[cytochrome c] + 3 H(+). Functionally, reduces trimethylamine-N-oxide (TMAO) into trimethylamine; an anaerobic reaction coupled to energy-yielding reactions. This chain is Trimethylamine-N-oxide reductase (torA), found in Vibrio vulnificus (strain YJ016).